The chain runs to 57 residues: UPF0391 membrane protein RB0084 (57 aa).

The next 2 helical transmembrane spans lie at 4 to 24 and 33 to 53; these read WALIFFVISLIAGFLGFSGVS and ILFYIAVIIFLVFLVLALAVG.

Belongs to the UPF0391 family.

It is found in the cell membrane. This is UPF0391 membrane protein RB0084 from Rhizobium meliloti (strain 1021) (Ensifer meliloti).